We begin with the raw amino-acid sequence, 349 residues long: uncharacterized protein (349 aa).

Residue S2 is modified to Phosphoserine.

This is an uncharacterized protein from Saccharomyces cerevisiae (strain ATCC 204508 / S288c) (Baker's yeast).